Reading from the N-terminus, the 246-residue chain is Ribonuclease PH (246 aa).

Phosphate is bound by residues R95 and G133–R135.

Belongs to the RNase PH family. Homohexameric ring arranged as a trimer of dimers.

The catalysed reaction is tRNA(n+1) + phosphate = tRNA(n) + a ribonucleoside 5'-diphosphate. Functionally, phosphorolytic 3'-5' exoribonuclease that plays an important role in tRNA 3'-end maturation. Removes nucleotide residues following the 3'-CCA terminus of tRNAs; can also add nucleotides to the ends of RNA molecules by using nucleoside diphosphates as substrates, but this may not be physiologically important. Probably plays a role in initiation of 16S rRNA degradation (leading to ribosome degradation) during starvation. The polypeptide is Ribonuclease PH (Bordetella bronchiseptica (strain ATCC BAA-588 / NCTC 13252 / RB50) (Alcaligenes bronchisepticus)).